A 418-amino-acid chain; its full sequence is Hepatic and glial cell adhesion molecule (418 aa).

The signal sequence occupies residues 1–33 (MKREREAPSRAFSALRLAPFVYLLLIQTEPLEG). One can recognise an Ig-like V-type domain in the interval 34–141 (VNITSPVRLI…TGEKTINLTV (108 aa)). Residues 34–240 (VNITSPVRLI…VKITVYRRSS (207 aa)) lie on the Extracellular side of the membrane. N-linked (GlcNAc...) asparagine glycosylation is found at asparagine 35, asparagine 138, asparagine 167, and asparagine 189. Positions 148–234 (PQVLVASTTV…QGRSPPVKIT (87 aa)) constitute an Ig-like C2-type domain. Cysteine 168 and cysteine 217 form a disulfide bridge. A helical membrane pass occupies residues 241-261 (LYIILSTGGIFLLVTLVTVCA). The Cytoplasmic portion of the chain corresponds to 262–418 (CWKPSKKSGK…DEAGPVEISA (157 aa)). The disordered stretch occupies residues 271-418 (KKRKLEKQNS…DEAGPVEISA (148 aa)). Serine 280 bears the Phosphoserine mark. Over residues 287 to 308 (SDDRLKPEADTLPRSGEQERKN) the composition is skewed to basic and acidic residues. Residues serine 352 and serine 379 each carry the phosphoserine modification. Residues 385 to 400 (GSPGRSRSASRTLRTA) show a composition bias toward low complexity.

Homodimer. Dimer formation occurs predominantly through cis interactions on the cell surface. Part of a complex containing MLC1, TRPV4, AQP4 and ATP1B1. Interacts with CLCN2. N-glycosylated.

It localises to the cytoplasm. The protein localises to the cell membrane. Its function is as follows. Involved in regulating cell motility and cell-matrix interactions. May inhibit cell growth through suppression of cell proliferation. In glia, associates and targets CLCN2 at astrocytic processes and myelinated fiber tracts where it may regulate transcellular chloride flux involved in neuron excitability. The polypeptide is Hepatic and glial cell adhesion molecule (Bos taurus (Bovine)).